We begin with the raw amino-acid sequence, 54 residues long: MSPQTETKASVGFKAGVKEYKLTYYTPDYETKDTDILAAFRVTPQPGVPPEEAG.

The propeptide occupies 1–2; it reads MS. At proline 3 the chain carries N-acetylproline. Lysine 14 carries the N6,N6,N6-trimethyllysine modification.

This sequence belongs to the RuBisCO large chain family. Type I subfamily. In terms of assembly, heterohexadecamer of 8 large chains and 8 small chains.

The protein localises to the plastid. It localises to the chloroplast. The catalysed reaction is 2 (2R)-3-phosphoglycerate + 2 H(+) = D-ribulose 1,5-bisphosphate + CO2 + H2O. It carries out the reaction D-ribulose 1,5-bisphosphate + O2 = 2-phosphoglycolate + (2R)-3-phosphoglycerate + 2 H(+). Functionally, ruBisCO catalyzes two reactions: the carboxylation of D-ribulose 1,5-bisphosphate, the primary event in carbon dioxide fixation, as well as the oxidative fragmentation of the pentose substrate in the photorespiration process. Both reactions occur simultaneously and in competition at the same active site. In Geum borisii (Avens), this protein is Ribulose bisphosphate carboxylase large chain (rbcL).